The sequence spans 237 residues: Sugar fermentation stimulation protein homolog (237 aa).

The protein belongs to the SfsA family.

This is Sugar fermentation stimulation protein homolog from Pseudomonas savastanoi pv. phaseolicola (strain 1448A / Race 6) (Pseudomonas syringae pv. phaseolicola (strain 1448A / Race 6)).